The following is a 261-amino-acid chain: Glucose 1-dehydrogenase (261 aa).

An NADP(+)-binding site is contributed by 11–35 (AITGAASGLGKAMAIRFGKEQAKVV). Position 145 (serine 145) interacts with substrate. The active-site Proton acceptor is tyrosine 158.

It belongs to the short-chain dehydrogenases/reductases (SDR) family. As to quaternary structure, homotetramer.

It carries out the reaction D-glucose + NAD(+) = D-glucono-1,5-lactone + NADH + H(+). The catalysed reaction is D-glucose + NADP(+) = D-glucono-1,5-lactone + NADPH + H(+). This Bacillus subtilis (strain 168) protein is Glucose 1-dehydrogenase (gdh).